A 316-amino-acid chain; its full sequence is Glutamyl-Q tRNA(Asp) synthetase (316 aa).

Residues 13 to 17 (RFAPS) and Asp49 each bind L-glutamate. Residues 16 to 26 (PSPSGDLHFGS) carry the 'HIGH' region motif. Residues Cys105, Cys107, Tyr119, and Cys123 each contribute to the Zn(2+) site. Tyr176 and Arg194 together coordinate L-glutamate. The 'KMSKS' region motif lies at 232–236 (KLSKQ). Lys235 contacts ATP.

Belongs to the class-I aminoacyl-tRNA synthetase family. GluQ subfamily. Zn(2+) serves as cofactor.

Catalyzes the tRNA-independent activation of glutamate in presence of ATP and the subsequent transfer of glutamate onto a tRNA(Asp). Glutamate is transferred on the 2-amino-5-(4,5-dihydroxy-2-cyclopenten-1-yl) moiety of the queuosine in the wobble position of the QUC anticodon. This chain is Glutamyl-Q tRNA(Asp) synthetase, found in Photorhabdus laumondii subsp. laumondii (strain DSM 15139 / CIP 105565 / TT01) (Photorhabdus luminescens subsp. laumondii).